The following is a 541-amino-acid chain: Phosphoenolpyruvate carboxykinase (ATP) (541 aa).

Residue 243-250 participates in ATP binding; it reads GLSGTGKT.

Belongs to the phosphoenolpyruvate carboxykinase (ATP) family.

The enzyme catalyses oxaloacetate + ATP = phosphoenolpyruvate + ADP + CO2. The protein operates within carbohydrate biosynthesis; gluconeogenesis. This chain is Phosphoenolpyruvate carboxykinase (ATP) (PCK1), found in Eremothecium gossypii (strain ATCC 10895 / CBS 109.51 / FGSC 9923 / NRRL Y-1056) (Yeast).